The chain runs to 232 residues: MCAPSGPGNKFPDFQAETNEGFISSFYDWIGKDSWAILFSHPRDFTPVCTTELARLVQLAPEFKKRNVKLIGLSCDSADSHSKWADDILALYKMKCVGCDSEKKLPYPIIADEDRSLATELGMMDPDERDEKGNTLTARCVFIIGSDKTLKLSILYPATTGRNFDEILRVVDSLQLTAVKLVATPVDWKDGDDCVVLPTIDDNEAKKLFGEKIHTIDLPSGKHYLRMVPHPK.

The region spanning 5–176 (SGPGNKFPDF…ILRVVDSLQL (172 aa)) is the Thioredoxin domain. C49 is a catalytic residue. The Cysteine sulfenic acid (-SOH) intermediate role is filled by C49.

It belongs to the peroxiredoxin family. Prx6 subfamily.

It catalyses the reaction a hydroperoxide + [protein]-dithiol = [protein]-disulfide + an alcohol + H2O. Its function is as follows. Thiol-specific peroxidase that catalyzes the reduction of hydrogen peroxide and organic hydroperoxides to water and alcohols, respectively. Plays a role in cell protection against oxidative stress by detoxifying peroxides. The chain is 1-Cys peroxiredoxin (TSA) from Onchocerca volvulus.